Consider the following 119-residue polypeptide: MIELAKNHLKKVLEVCGANRNCEYYPCHFDGQVCLWCYCPFYPCEDEELGEYVEKKDGTKIWSCMKCFWVHREDVATEILREILNLTKDKDIDEALKLLDNHELMLKIKDRVKAKYPNR.

This is an uncharacterized protein from Methanocaldococcus jannaschii (strain ATCC 43067 / DSM 2661 / JAL-1 / JCM 10045 / NBRC 100440) (Methanococcus jannaschii).